The sequence spans 1342 residues: DNA-directed RNA polymerase subunit beta (1342 aa).

It belongs to the RNA polymerase beta chain family. The RNAP catalytic core consists of 2 alpha, 1 beta, 1 beta' and 1 omega subunit. When a sigma factor is associated with the core the holoenzyme is formed, which can initiate transcription.

It catalyses the reaction RNA(n) + a ribonucleoside 5'-triphosphate = RNA(n+1) + diphosphate. DNA-dependent RNA polymerase catalyzes the transcription of DNA into RNA using the four ribonucleoside triphosphates as substrates. This chain is DNA-directed RNA polymerase subunit beta, found in Pasteurella multocida (strain Pm70).